A 370-amino-acid chain; its full sequence is Cap-specific mRNA (nucleoside-2'-O-)-methyltransferase 1 (370 aa).

The 208-residue stretch at alanine 87 to isoleucine 294 folds into the RrmJ-type SAM-dependent 2'-O-MTase domain. 2 residues coordinate S-adenosyl-L-methionine: glycine 130 and aspartate 207. Lysine 248 serves as the catalytic Proton acceptor.

In terms of assembly, component of a complex composed of CBF5, GAR1, NHP2, MTR1, NOP10 and Tb11.01.8210.

Its subcellular location is the nucleus. The catalysed reaction is a 5'-end (N(7)-methyl 5'-triphosphoguanosine)-ribonucleoside in mRNA + S-adenosyl-L-methionine = a 5'-end (N(7)-methyl 5'-triphosphoguanosine)-(2'-O-methyl-ribonucleoside) in mRNA + S-adenosyl-L-homocysteine + H(+). In terms of biological role, S-adenosyl-L-methionine-dependent methyltransferase that mediates RNA cap1 2'-O-ribose methylation to the 5'-cap structure of spliced leader and U1 small nuclear RNAs. Methylates the ribose of the first nucleotide of a m(7)GpppG-capped RNA to produce m(7)GpppNmp (cap1). Cap1 modification is linked to higher levels of translation. Recognizes a guanosine cap on RNA independent of its N(7) methylation status. In Trypanosoma brucei brucei (strain 927/4 GUTat10.1), this protein is Cap-specific mRNA (nucleoside-2'-O-)-methyltransferase 1 (MTR1).